The following is a 301-amino-acid chain: Ribonuclease HIII (301 aa).

One can recognise an RNase H type-2 domain in the interval 90-301 (TPHIGIDESG…LDAILGKVGK (212 aa)). A divalent metal cation is bound by residues D96, E97, and D198.

Belongs to the RNase HII family. RnhC subfamily. Mn(2+) is required as a cofactor. The cofactor is Mg(2+).

Its subcellular location is the cytoplasm. The enzyme catalyses Endonucleolytic cleavage to 5'-phosphomonoester.. Functionally, endonuclease that specifically degrades the RNA of RNA-DNA hybrids. This is Ribonuclease HIII from Protochlamydia amoebophila (strain UWE25).